The sequence spans 58 residues: Large ribosomal subunit protein uL30 (58 aa).

This sequence belongs to the universal ribosomal protein uL30 family. Part of the 50S ribosomal subunit.

The sequence is that of Large ribosomal subunit protein uL30 from Pseudomonas aeruginosa (strain LESB58).